The primary structure comprises 180 residues: Methionine-R-sulfoxide reductase B2, mitochondrial (180 aa).

Residues 1 to 41 (MSRFLVRLSTVVSKGATGKSVLPQKRIFAGIRLISSSTGLQ) constitute a mitochondrion transit peptide. The MsrB domain occupies 49-178 (STDWQRKLSP…NSVALNFKPR (130 aa)). 4 residues coordinate Zn(2+): Cys-88, Cys-91, Cys-144, and Cys-147. The Nucleophile role is filled by Cys-167.

This sequence belongs to the MsrB Met sulfoxide reductase family. Zn(2+) is required as a cofactor.

The protein resides in the mitochondrion. The enzyme catalyses L-methionyl-[protein] + [thioredoxin]-disulfide + H2O = L-methionyl-(R)-S-oxide-[protein] + [thioredoxin]-dithiol. It carries out the reaction [thioredoxin]-disulfide + L-methionine + H2O = L-methionine (R)-S-oxide + [thioredoxin]-dithiol. Its function is as follows. Methionine-sulfoxide reductase that specifically reduces methionine (R)-sulfoxide back to methionine. While in many cases, methionine oxidation is the result of random oxidation following oxidative stress, methionine oxidation is also a post-translational modification that takes place on specific residue. Upon oxidative stress, may play a role in the preservation of mitochondrial integrity by decreasing the intracellular reactive oxygen species build-up through its scavenging role, hence contributing to cell survival and protein maintenance. The chain is Methionine-R-sulfoxide reductase B2, mitochondrial (msrb2) from Danio rerio (Zebrafish).